The primary structure comprises 205 residues: Large ribosomal subunit protein uL18 (205 aa).

Belongs to the universal ribosomal protein uL18 family. As to quaternary structure, part of the 50S ribosomal subunit. Contacts the 5S and 23S rRNAs.

This is one of the proteins that bind and probably mediate the attachment of the 5S RNA into the large ribosomal subunit, where it forms part of the central protuberance. This is Large ribosomal subunit protein uL18 from Pyrobaculum aerophilum (strain ATCC 51768 / DSM 7523 / JCM 9630 / CIP 104966 / NBRC 100827 / IM2).